We begin with the raw amino-acid sequence, 203 residues long: ATP-dependent Clp protease proteolytic subunit (203 aa).

Catalysis depends on Ser100, which acts as the Nucleophile. His125 is an active-site residue.

The protein belongs to the peptidase S14 family. In terms of assembly, fourteen ClpP subunits assemble into 2 heptameric rings which stack back to back to give a disk-like structure with a central cavity, resembling the structure of eukaryotic proteasomes.

It localises to the cytoplasm. The enzyme catalyses Hydrolysis of proteins to small peptides in the presence of ATP and magnesium. alpha-casein is the usual test substrate. In the absence of ATP, only oligopeptides shorter than five residues are hydrolyzed (such as succinyl-Leu-Tyr-|-NHMec, and Leu-Tyr-Leu-|-Tyr-Trp, in which cleavage of the -Tyr-|-Leu- and -Tyr-|-Trp bonds also occurs).. Cleaves peptides in various proteins in a process that requires ATP hydrolysis. Has a chymotrypsin-like activity. Plays a major role in the degradation of misfolded proteins. The polypeptide is ATP-dependent Clp protease proteolytic subunit (Anaeromyxobacter sp. (strain K)).